The chain runs to 279 residues: Inhibitor of growth protein 1 (279 aa).

Positions 115–206 (AHQDISDGTG…EASPADLPID (92 aa)) are disordered. A Glycyl lysine isopeptide (Lys-Gly) (interchain with G-Cter in SUMO2) cross-link involves residue K135. The segment covering 154 to 171 (RNNENRENASNNHDHDDI) has biased composition (basic and acidic residues). Positions 179-191 (KKAKTSKKKKRSK) are enriched in basic residues. The PHD-type zinc-finger motif lies at 210–259 (PTYCLCNQVSYGEMIGCDNDECPIEWFHFSCVGLNHKPKGKWYCPKCRGE). Residues C213, C215, C226, C231, H237, C240, C253, and C256 each contribute to the Zn(2+) site. Residues 262 to 279 (KTMDKALEKSKKERAYNR) form a PBR region.

This sequence belongs to the ING family. In terms of assembly, interacts with H3K4me3 and to a lesser extent with H3K4me2. Isoform 2 interacts with RSL1D1. In terms of tissue distribution, in the adult, widely expressed with highest levels in thymus and testis.

Its subcellular location is the nucleus. In terms of biological role, isoform 1 inhibits p53-dependent transcriptional activation and may function as an oncoprotein. Isoform 2 acts as a negative growth regulator by cooperating with p53 in transcriptional activation of p53-responsive genes and may act as a tumor suppressor. The chain is Inhibitor of growth protein 1 (Ing1) from Mus musculus (Mouse).